The sequence spans 102 residues: Lipopolysaccharide assembly protein A (102 aa).

The Cytoplasmic segment spans residues 1-2 (MK). A helical membrane pass occupies residues 3–23 (YLLIFLLVLAIFVISVTLGAQ). The Periplasmic segment spans residues 24 to 43 (NDQQVTFNYLLAQGEYRIST). A helical transmembrane segment spans residues 44-64 (LLAVLFAAGFAIGWLICGLFW). A coiled-coil region spans residues 64-92 (WLRVRVSLARAERKIKRLENQLSPATDVA). The Cytoplasmic segment spans residues 65 to 102 (LRVRVSLARAERKIKRLENQLSPATDVAVVPHSSAAKE).

It belongs to the LapA family.

Its subcellular location is the cell inner membrane. Its function is as follows. Involved in the assembly of lipopolysaccharide (LPS). The polypeptide is Lipopolysaccharide assembly protein A (Escherichia coli (strain K12)).